A 190-amino-acid polypeptide reads, in one-letter code: Selenoprotein S (190 aa).

The helical transmembrane segment at 28–48 (SLLATYGWYIVFCCILLYVVF) threads the bilayer. Positions 78–90 (RQEALAAARLKMQ) are VCP/p97-interacting motif (VIM). The span at 115 to 138 (KIERWDSVQEGRSYRGDARKRQEE) shows a compositional bias: basic and acidic residues. Residues 115 to 190 (KIERWDSVQE…RRGPSSGGUG (76 aa)) are disordered. Ser-140 bears the Phosphoserine mark. Over residues 160-174 (RGGGYNPLSGEGGGA) the composition is skewed to gly residues. Position 189 (Sec-189) is a non-standard amino acid, selenocysteine.

Belongs to the selenoprotein S family. As to quaternary structure, interacts with DERL1 and (via VIM motif) with VCP, suggesting that it forms a membrane complex with DERL1 that serves as a receptor for VCP. Also interacts with DERL2, DERL3 and SELENOK. The SELENOK-SELENOS complex interacts with VCP. Truncated SELENOS proteins produced by failed UGA/Sec decoding are ubiquitinated by the CRL2(KLHDC2) and CRL2(KLHDC3) complexes, which recognizes the glycine (Gly) at the C-terminus of truncated SELENOS proteins. Truncated SELENOS proteins produced by failed UGA/Sec decoding are also ubiquitinated by the CRL5(KLHDC1) complex. In terms of tissue distribution, ubiquitously expressed. Highest expression in liver and lung, with lower levels detected in spleen, kidney, brain, lymph nodes, small intestine, stomach and heart. Very low expression detected in longissimus dorsi.

The protein localises to the cytoplasm. The protein resides in the endoplasmic reticulum membrane. Its function is as follows. Involved in the degradation process of misfolded endoplasmic reticulum (ER) luminal proteins. Participates in the transfer of misfolded proteins from the ER to the cytosol, where they are destroyed by the proteasome in a ubiquitin-dependent manner. Probably acts by serving as a linker between DERL1, which mediates the retrotranslocation of misfolded proteins into the cytosol, and the ATPase complex VCP, which mediates the translocation and ubiquitination. This is Selenoprotein S from Sus scrofa (Pig).